A 510-amino-acid chain; its full sequence is Bifunctional pantoate ligase/cytidylate kinase (510 aa).

The tract at residues 1-276 (MNKIIIRKTE…CGKTRLIDHV (276 aa)) is pantoate--beta-alanine ligase. 29 to 36 (MGNLHDGH) is an ATP binding site. His-36 functions as the Proton donor in the catalytic mechanism. A (R)-pantoate-binding site is contributed by Gln-61. Residue Gln-61 participates in beta-alanine binding. 150–153 (GEKD) is a binding site for ATP. Gln-156 contacts (R)-pantoate. 187–190 (FSSR) is a binding site for ATP. Residues 277 to 510 (FLMKRKPIIA…LNIPKEIQLE (234 aa)) are cytidylate kinase.

In the N-terminal section; belongs to the pantothenate synthetase family. This sequence in the C-terminal section; belongs to the cytidylate kinase family. Type 1 subfamily.

It localises to the cytoplasm. It catalyses the reaction (R)-pantoate + beta-alanine + ATP = (R)-pantothenate + AMP + diphosphate + H(+). It carries out the reaction CMP + ATP = CDP + ADP. The catalysed reaction is dCMP + ATP = dCDP + ADP. It functions in the pathway cofactor biosynthesis; (R)-pantothenate biosynthesis; (R)-pantothenate from (R)-pantoate and beta-alanine: step 1/1. In terms of biological role, catalyzes the condensation of pantoate with beta-alanine in an ATP-dependent reaction via a pantoyl-adenylate intermediate. Catalyzes the transfer of a phosphate group from ATP to either CMP or dCMP to form CDP or dCDP and ADP, respectively. The chain is Bifunctional pantoate ligase/cytidylate kinase from Prochlorococcus marinus subsp. pastoris (strain CCMP1986 / NIES-2087 / MED4).